The following is a 286-amino-acid chain: Eukaryotic translation initiation factor 3 subunit F-2 (286 aa).

Residues 11 to 147 form the MPN domain; that stretch reads ILLQPLVLLH…MRLYTAVVMG (137 aa).

It belongs to the eIF-3 subunit F family. In terms of assembly, component of the eukaryotic translation initiation factor 3 (eIF-3) complex. The eIF-3 complex interacts with pix.

Its subcellular location is the cytoplasm. Functionally, component of the eukaryotic translation initiation factor 3 (eIF-3) complex, which is involved in protein synthesis of a specialized repertoire of mRNAs and, together with other initiation factors, stimulates binding of mRNA and methionyl-tRNAi to the 40S ribosome. The eIF-3 complex specifically targets and initiates translation of a subset of mRNAs involved in cell proliferation. This chain is Eukaryotic translation initiation factor 3 subunit F-2, found in Drosophila willistoni (Fruit fly).